The following is a 312-amino-acid chain: Malate dehydrogenase (312 aa).

Residues 12–17 (GAGFTG) and Asp36 contribute to the NAD(+) site. Positions 87 and 93 each coordinate substrate. NAD(+)-binding positions include Asn100 and 123 to 125 (LTN). Position 125 (Asn125) interacts with substrate. Ser149 carries the post-translational modification Phosphoserine. Residue Arg156 participates in substrate binding. The active-site Proton acceptor is His180.

This sequence belongs to the LDH/MDH superfamily. MDH type 3 family.

It catalyses the reaction (S)-malate + NAD(+) = oxaloacetate + NADH + H(+). Its function is as follows. Catalyzes the reversible oxidation of malate to oxaloacetate. The chain is Malate dehydrogenase from Geobacillus thermodenitrificans.